A 668-amino-acid chain; its full sequence is Pentatricopeptide repeat-containing protein CRP1, chloroplastic (668 aa).

The N-terminal 64 residues, 1 to 64, are a transit peptide targeting the chloroplast; it reads MPASLLPPTF…SASLTSPSPP (64 aa). 14 PPR repeats span residues 154–188, 189–226, 227–261, 262–297, 298–332, 333–367, 368–402, 403–437, 438–472, 473–507, 508–542, 543–577, 578–612, and 613–647; these read SPLLLNSLLAASAAASRPAVALRLLSLLREHDFLP, DLASYSHLLASLLNTRDPPDAALLERLLGDLRESRLEP, DAPLFSDLISAFARAALPDAALELLASAQAIGLTP, RSNAVTALISALGTAGRVAEAEALFLEFFLAGEIKP, RTRAYNALLKGYVRIASLKNAEQVLDEMSQCGVAP, DEATYSLLVDAYTRAGRWESARILLKEMEADGVKP, SSYVFSRILAGFRDRGDWQKAFAVLREMQASGVRP, DRHFYNVMIDTFGKYNCLGHAMDAFNKMREEGIEP, DVVTWNTLIDAHCKGGRHDRAAELFEEMRESNCPP, GTTTYNIMINLLGEQEHWEGVEAMLSEMKEQGLVP, NIITYTTLVDVYGRSGRYKEAIDCIEAMKADGLKP, SPTMYHALVNAYAQRGLADHALNVVKAMKADGLEV, SILVLNSLINAFGEDRRVVEAFSVLQFMRENGLRP, and DVITYTTLMKALIRVEQFDKVPVIYEEMITSGCAP.

Belongs to the PPR family. P subfamily. In terms of assembly, component of a multisubunit complex.

It is found in the plastid. The protein resides in the chloroplast stroma. In terms of biological role, required for the translation of the chloroplast petA and petD mRNAs. Required for the processing of the petD mRNA from a polycistronic precursor. Binds with high affinity to the 5'-UTR of the chloroplastic petA transcript. Activates psaC and petA translation by binding their 5'-UTRs. This is Pentatricopeptide repeat-containing protein CRP1, chloroplastic from Zea mays (Maize).